The primary structure comprises 115 residues: Large ribosomal subunit protein bL19 (115 aa).

It belongs to the bacterial ribosomal protein bL19 family.

In terms of biological role, this protein is located at the 30S-50S ribosomal subunit interface and may play a role in the structure and function of the aminoacyl-tRNA binding site. This chain is Large ribosomal subunit protein bL19, found in Streptococcus thermophilus (strain CNRZ 1066).